The primary structure comprises 151 residues: SsrA-binding protein (151 aa).

The segment at 132 to 151 is disordered; the sequence is KRQTIKKRDQDREIHRKYGI.

This sequence belongs to the SmpB family.

It localises to the cytoplasm. Required for rescue of stalled ribosomes mediated by trans-translation. Binds to transfer-messenger RNA (tmRNA), required for stable association of tmRNA with ribosomes. tmRNA and SmpB together mimic tRNA shape, replacing the anticodon stem-loop with SmpB. tmRNA is encoded by the ssrA gene; the 2 termini fold to resemble tRNA(Ala) and it encodes a 'tag peptide', a short internal open reading frame. During trans-translation Ala-aminoacylated tmRNA acts like a tRNA, entering the A-site of stalled ribosomes, displacing the stalled mRNA. The ribosome then switches to translate the ORF on the tmRNA; the nascent peptide is terminated with the 'tag peptide' encoded by the tmRNA and targeted for degradation. The ribosome is freed to recommence translation, which seems to be the essential function of trans-translation. In Lactobacillus johnsonii (strain CNCM I-12250 / La1 / NCC 533), this protein is SsrA-binding protein.